A 278-amino-acid polypeptide reads, in one-letter code: GTPase Era (278 aa).

The 162-residue stretch at 7-168 folds into the Era-type G domain; that stretch reads YCGYIAIVGK…ENLIYPYLPN (162 aa). The interval 15 to 22 is G1; that stretch reads GKPNVGKS. GTP is bound at residue 15–22; that stretch reads GKPNVGKS. The tract at residues 41–45 is G2; the sequence is NTTQK. The interval 62-65 is G3; the sequence is DTPG. GTP contacts are provided by residues 62-66 and 117-120; these read DTPGI and NKID. A G4 region spans residues 117-120; that stretch reads NKID. Residues 147–149 are G5; it reads ISA. The KH type-2 domain occupies 199 to 276; sequence LRDELPSIIT…YLIIWVKVKI (78 aa).

It belongs to the TRAFAC class TrmE-Era-EngA-EngB-Septin-like GTPase superfamily. Era GTPase family. Monomer.

It localises to the cytoplasm. Its subcellular location is the cell membrane. An essential GTPase that binds both GDP and GTP, with rapid nucleotide exchange. Plays a role in 16S rRNA processing and 30S ribosomal subunit biogenesis and possibly also in cell cycle regulation and energy metabolism. The chain is GTPase Era from Buchnera aphidicola subsp. Schizaphis graminum (strain Sg).